A 589-amino-acid polypeptide reads, in one-letter code: Heterogeneous nuclear ribonucleoprotein L (589 aa).

Positions 1–16 (MSRRLLPRAEKRRRRL) are enriched in basic residues. A disordered region spans residues 1-100 (MSRRLLPRAE…NYDDPHKTPA (100 aa)). A compositionally biased stretch (basic and acidic residues) spans 17–27 (EQRQQPDEQRR). Residues 38-54 (AGGGGGGGRYYGGGSEG) show a composition bias toward gly residues. Phosphoserine is present on Ser52. Glycyl lysine isopeptide (Lys-Gly) (interchain with G-Cter in SUMO2) cross-links involve residues Lys59 and Lys62. A compositionally biased stretch (gly residues) spans 69-90 (QHGGGGGGGGGAGAAGGGGGGE). The residue at position 101 (Ser101) is a Phosphoserine. The RRM 1 domain maps to 102 to 176 (PVVHIRGLID…HPAFVNYSTS (75 aa)). Lys136 participates in a covalent cross-link: Glycyl lysine isopeptide (Lys-Gly) (interchain with G-Cter in SUMO2). Ser185 bears the Phosphoserine mark. One can recognise an RRM 2 domain in the interval 193-270 (SVLLFTILNP…CTLKIEYAKP (78 aa)). An N6-acetyllysine modification is found at Lys269. Positions 284–301 (DYTNPNLSGQGDPGSNPN) are enriched in polar residues. Positions 284–378 (DYTNPNLSGQ…PPPPPEYGPH (95 aa)) are disordered. 2 positions are modified to phosphoserine: Ser291 and Ser298. Lys302 is covalently cross-linked (Glycyl lysine isopeptide (Lys-Gly) (interchain with G-Cter in SUMO2)). Arg354 and Arg358 each carry asymmetric dimethylarginine. Residues 364-375 (GHPPPPPPPPEY) show a composition bias toward pro residues. Residue Ser381 is modified to Phosphoserine. 2 consecutive RRM domains span residues 382–478 (PVLM…KDFS) and 495–583 (RIQH…LCFS). Ser544 is modified (phosphoserine; by CaMK4). Lys568 is covalently cross-linked (Glycyl lysine isopeptide (Lys-Gly) (interchain with G-Cter in SUMO2)).

In terms of assembly, identified in a IGF2BP1-dependent mRNP granule complex containing untranslated mRNAs. Interacts with HNRNPLL. Interacts with APEX1; the interaction is DNA-dependent. Component of a complex with SETD2. Interacts with ELAVL1. Part of a transcription inhibitory ribonucleoprotein complex composed at least of the circular RNA circZNF827, ZNF827 and HNRNPK. Interacts with CHD8 in an RNA-dependent manner. Several isoelectric forms of the L protein are probably the results of post-translational modifications. In terms of processing, phosphorylation at Ser-544 by CaMK4 enhances interaction with a CaMK4-responsive RNA element (CaRRE1), and prevents inclusion of the stress axis-regulated exon (STREX) of the KCNMA1 potassium channel transcripts upon membrane depolarization.

It is found in the nucleus. The protein resides in the nucleoplasm. Its subcellular location is the cytoplasm. Splicing factor binding to exonic or intronic sites and acting as either an activator or repressor of exon inclusion. Exhibits a binding preference for CA-rich elements. Component of the heterogeneous nuclear ribonucleoprotein (hnRNP) complexes and associated with most nascent transcripts. Associates, together with APEX1, to the negative calcium responsive element (nCaRE) B2 of the APEX2 promoter. As part of a ribonucleoprotein complex composed at least of ZNF827, HNRNPK and the circular RNA circZNF827 that nucleates the complex on chromatin, may negatively regulate the transcription of genes involved in neuronal differentiation. Regulates alternative splicing of a core group of genes involved in neuronal differentiation, likely by mediating H3K36me3-coupled transcription elongation and co-transcriptional RNA processing via interaction with CHD8. The polypeptide is Heterogeneous nuclear ribonucleoprotein L (HNRNPL) (Homo sapiens (Human)).